The primary structure comprises 206 residues: ATP-dependent Clp protease proteolytic subunit (206 aa).

Serine 110 acts as the Nucleophile in catalysis. Residue histidine 135 is part of the active site.

The protein belongs to the peptidase S14 family. Fourteen ClpP subunits assemble into 2 heptameric rings which stack back to back to give a disk-like structure with a central cavity, resembling the structure of eukaryotic proteasomes.

The protein resides in the cytoplasm. It catalyses the reaction Hydrolysis of proteins to small peptides in the presence of ATP and magnesium. alpha-casein is the usual test substrate. In the absence of ATP, only oligopeptides shorter than five residues are hydrolyzed (such as succinyl-Leu-Tyr-|-NHMec, and Leu-Tyr-Leu-|-Tyr-Trp, in which cleavage of the -Tyr-|-Leu- and -Tyr-|-Trp bonds also occurs).. Cleaves peptides in various proteins in a process that requires ATP hydrolysis. Has a chymotrypsin-like activity. Plays a major role in the degradation of misfolded proteins. This Edwardsiella ictaluri (strain 93-146) protein is ATP-dependent Clp protease proteolytic subunit.